The sequence spans 504 residues: Maturase K (504 aa).

The protein belongs to the intron maturase 2 family. MatK subfamily.

The protein resides in the plastid. The protein localises to the chloroplast. Functionally, usually encoded in the trnK tRNA gene intron. Probably assists in splicing its own and other chloroplast group II introns. In Lepidium campestre (Field pepperwort), this protein is Maturase K.